Reading from the N-terminus, the 1052-residue chain is MAAVTFASAITNAITNKTTSTGMVQFGSFPPMPLRSTTVTTVATPVGQPKLYTVRFGSLDPVIVKGGAGSLAKATRQQPSVEIDVSLSEAAALEVAKPKSSAVLRMHEEANKERALFLDWEASLKRRSYGIAENEKVVMTTRGVSKIVPRSSRAMKQKRARERRRAQQPIILKWEPKLSGFSIGGGFSASAIEAEEVRTKWPLHKTPSMKKRMVHKTCKMSDQGVDMLIRSLVKIFKAKSANIEYIGKKPIKVDFIRKERTKFARIQVAHLLGKRAQRDLLAGMEENHFIDILSEYSGNGTTINPGVVCAGWSGIVVRNETLTQKRSRSPSKAFVIRGEHEDKLYDARIKITKTMSLKIVHFSARGANFWKGFDRCFLAYRSDNREHTCYSGLDVTECGEVAALMCLAMFPCGKITCPDCVIDSELSQGQASGPSMKHRLTQLRDVIKSSYPRFKHAVQILDRYEQSLSSANENYQDFAEIQSISDGVEKAAFPHVNKLNAILIKGATATGEEFSQATKHLLEIARYLKNRTENIEKGSLKSFRNKVSQKAHINPTLMCDNQLDKNGNFIWGERGYHAKRFFSNYFEIIDPKKGYTQYETRVVPNGSRKLAIGKLIVPTNFEVLREQMRGEPVEPYPVTVECVSKSQGDFVHACCCVTTESGDPVLSEIKMPTKHHLVIGNSGDPKYIDLPEIEENKMYIAKEGYCYINIFLAMLVNVKESQAKEFTKVVRDKLVSELGKWPTLLDVATACYFLKVFYPDVANAELPRMLVDHKTKIIHVVDSYGSLSTGYHVLKTNTVEQLIKFTRCNLESSLKHYRVGGTEWENAHGADNIDNPQWCIKRLVKGVYRPKQLKEDMLANPFLPLYALLSPGVILAFYNSGSLEHLMNHYISADSNVAVLLVVLKSLAKKVSTSQSVLAQLQIIERSLPELIEAKANINGPDDAATRACNRFMGMLLHMAEPNYELANGGYTFLRDHSISILEKKLSADLGRGMERVKLVGALCYKILPVKASNLYTERFANAKRSRFRRQIQRVGHILLRVEQTASKRSER.

The Peptidase S30 domain maps to 219–362; that stretch reads KMSDQGVDML…KTMSLKIVHF (144 aa). Residues His-270, Asp-279, and Ser-313 each act as for P1 proteinase activity in the active site. An Involved in interaction with stylet and aphid transmission motif is present at residues 414–417; sequence KITC. Positions 672-674 match the Involved in virions binding and aphid transmission motif; the sequence is PTK. One can recognise a Peptidase C6 domain in the interval 698–820; that stretch reads MYIAKEGYCY…ESSLKHYRVG (123 aa). Catalysis depends on for helper component proteinase activity residues Cys-706 and His-779.

It belongs to the potyviridae P3N-PIPO polyprotein family. Interacts (via PIPO domain) with host PCaP1 protein; this interaction may help to anchor the movement complex to the plasma membrane from which the complex could move to the plasmodesmata. Potyviral RNA is expressed as two polyproteins which undergo post-translational proteolytic processing. Genome polyprotein is processed by NIa-pro, P1 and HC-pro proteinases resulting in the production of at least ten individual proteins. P3N-PIPO is cleaved by P1 and HC-pro proteinases resulting in the production of three individual proteins. The P1 proteinase and the HC-pro cleave only their respective C-termini autocatalytically.

The protein resides in the host cell junction. It is found in the host plasmodesma. It carries out the reaction Hydrolyzes a Gly-|-Gly bond at its own C-terminus, commonly in the sequence -Tyr-Xaa-Val-Gly-|-Gly, in the processing of the potyviral polyprotein.. In terms of biological role, required for aphid transmission and also has proteolytic activity. Only cleaves a Gly-Gly dipeptide at its own C-terminus. Interacts with virions and aphid stylets. Acts as a suppressor of RNA-mediated gene silencing, also known as post-transcriptional gene silencing (PTGS), a mechanism of plant viral defense that limits the accumulation of viral RNAs. May have RNA-binding activity. Functionally, allows efficient cell to cell propagation, by bypassing the host cell wall barrier. Transports viral genome to neighboring plant cells directly through plasmosdesmata, without any budding. The chain is P3N-PIPO polyprotein from Turnip mosaic virus (strain Quebec) (TuMV).